Here is a 366-residue protein sequence, read N- to C-terminus: Histidinol-phosphate aminotransferase (366 aa).

Position 228 is an N6-(pyridoxal phosphate)lysine (Lys-228).

It belongs to the class-II pyridoxal-phosphate-dependent aminotransferase family. Histidinol-phosphate aminotransferase subfamily. Homodimer. Pyridoxal 5'-phosphate is required as a cofactor.

It carries out the reaction L-histidinol phosphate + 2-oxoglutarate = 3-(imidazol-4-yl)-2-oxopropyl phosphate + L-glutamate. Its pathway is amino-acid biosynthesis; L-histidine biosynthesis; L-histidine from 5-phospho-alpha-D-ribose 1-diphosphate: step 7/9. The chain is Histidinol-phosphate aminotransferase from Corynebacterium glutamicum (strain ATCC 13032 / DSM 20300 / JCM 1318 / BCRC 11384 / CCUG 27702 / LMG 3730 / NBRC 12168 / NCIMB 10025 / NRRL B-2784 / 534).